A 279-amino-acid polypeptide reads, in one-letter code: Cholesterol 25-hydroxylase-like protein 2 (279 aa).

Residues N6 and N13 are each glycosylated (N-linked (GlcNAc...) asparagine). 3 membrane-spanning segments follow: residues 36 to 56 (LFPV…YTVL), 86 to 106 (LALT…AQWL), and 120 to 140 (LTAF…QYYL). The region spanning 128–262 (VGCTVVFDFQ…FAHWDWLGGT (135 aa)) is the Fatty acid hydroxylase domain. Residues 141–145 (WHLLH) carry the Histidine box-1 motif. The Histidine box-2 signature appears at 156–160 (HALHH). 2 consecutive transmembrane segments span residues 165–185 (TFSL…GFWT) and 189–209 (PLLL…NIWV). The Histidine box-3 motif lies at 237–243 (RHDAHHQ).

Belongs to the sterol desaturase family. It depends on Fe cation as a cofactor.

It localises to the endoplasmic reticulum membrane. Functionally, may catalyze the formation of 25-hydroxycholesterol from cholesterol. This is Cholesterol 25-hydroxylase-like protein 2 from Danio rerio (Zebrafish).